Reading from the N-terminus, the 241-residue chain is Pyridoxine 5'-phosphate synthase (241 aa).

Asn7 contributes to the 3-amino-2-oxopropyl phosphate binding site. 9-10 contacts 1-deoxy-D-xylulose 5-phosphate; sequence DH. A 3-amino-2-oxopropyl phosphate-binding site is contributed by Arg18. The active-site Proton acceptor is the His43. Residues Arg45 and His50 each contribute to the 1-deoxy-D-xylulose 5-phosphate site. The active-site Proton acceptor is Glu70. Thr100 serves as a coordination point for 1-deoxy-D-xylulose 5-phosphate. His191 (proton donor) is an active-site residue. Residues Gly192 and 213 to 214 each bind 3-amino-2-oxopropyl phosphate; that span reads GH.

Belongs to the PNP synthase family. Homooctamer; tetramer of dimers.

It is found in the cytoplasm. It carries out the reaction 3-amino-2-oxopropyl phosphate + 1-deoxy-D-xylulose 5-phosphate = pyridoxine 5'-phosphate + phosphate + 2 H2O + H(+). Its pathway is cofactor biosynthesis; pyridoxine 5'-phosphate biosynthesis; pyridoxine 5'-phosphate from D-erythrose 4-phosphate: step 5/5. Catalyzes the complicated ring closure reaction between the two acyclic compounds 1-deoxy-D-xylulose-5-phosphate (DXP) and 3-amino-2-oxopropyl phosphate (1-amino-acetone-3-phosphate or AAP) to form pyridoxine 5'-phosphate (PNP) and inorganic phosphate. This chain is Pyridoxine 5'-phosphate synthase, found in Solidesulfovibrio magneticus (strain ATCC 700980 / DSM 13731 / RS-1) (Desulfovibrio magneticus).